The primary structure comprises 317 residues: Hydroxyacyl-CoA dehydrogenase ChsB1 (317 aa).

Positions 32, 51, 82, 83, 108, 168, 181, 185, and 215 each coordinate NAD(+). Residues Ser-168, Tyr-181, and Lys-185 contribute to the active site.

Belongs to the short-chain dehydrogenases/reductases (SDR) family. As to quaternary structure, homodimer, with 1 active site on each face.

It catalyses the reaction (22S)-hydroxy-3-oxo-chol-4-ene-24-oyl-CoA + NAD(+) = 3,22-dioxochol-4-en-24-oyl-CoA + NADH + H(+). The protein operates within steroid metabolism; cholesterol degradation. In terms of biological role, a reversible dehydrogenase involved in cholesterol side-chain degradation. Catalyzes the oxidation of hydroxyl-cholesterol-CoA ester metabolic intermediate (22S)-HOCO-CoA (3-oxo-chol-4-ene-(22S)-hydroxy-24-oyl-CoA), the product of ChsH3, has no activity on (22R)-HOCO-CoA (the product of EchA19). Also acts on (3R)-hydroxyoctanoyl-CoA and 17-beta-hydroxyandrost-4-en-3-one, but not on 7-alpha-hydroxyandrost-4-en-3-one, uses NAD(+) but not NADP(+). This is Hydroxyacyl-CoA dehydrogenase ChsB1 from Mycobacterium tuberculosis (strain ATCC 25618 / H37Rv).